The chain runs to 110 residues: Ribonuclease P protein component 1 (110 aa).

It belongs to the eukaryotic/archaeal RNase P protein component 1 family. As to quaternary structure, consists of a catalytic RNA component and at least 4-5 protein subunits.

It is found in the cytoplasm. It carries out the reaction Endonucleolytic cleavage of RNA, removing 5'-extranucleotides from tRNA precursor.. Its function is as follows. Part of ribonuclease P, a protein complex that generates mature tRNA molecules by cleaving their 5'-ends. This chain is Ribonuclease P protein component 1, found in Methanosarcina acetivorans (strain ATCC 35395 / DSM 2834 / JCM 12185 / C2A).